The sequence spans 88 residues: Small ribosomal subunit protein bS20 (88 aa).

Belongs to the bacterial ribosomal protein bS20 family.

In terms of biological role, binds directly to 16S ribosomal RNA. The chain is Small ribosomal subunit protein bS20 from Mycoplasmopsis synoviae (strain 53) (Mycoplasma synoviae).